The following is a 145-amino-acid chain: Large ribosomal subunit protein bL9 (145 aa).

It belongs to the bacterial ribosomal protein bL9 family.

Its function is as follows. Binds to the 23S rRNA. The protein is Large ribosomal subunit protein bL9 of Mesomycoplasma hyopneumoniae (strain 7448) (Mycoplasma hyopneumoniae).